A 445-amino-acid polypeptide reads, in one-letter code: MARKYFGTDGIRGRVGQFPITPDFMLKLGWAAGMAFRKEGKCRILIGKDTRISGYMFESALEAGLAAAGADVQLLGPMPTPAIAYLTRTFQADAGIVISASHNPHDDNGIKFFSNEGTKLPDDVEAMIEELLDQPMTVVESAGIGKASRINDASGRYIEFCKGSVPSGTSFKGLKIVIDCAHGAAYKVAPSVFRELGAEVRVISAQPDGLNINDGCGSTHIAALQAEVVAQQADLGIAFDGDADRVLMVDQYGAVVDGDELLFIIARDLQERGRLRGGVVGTLMSNLGLELALAELNIPFVRAKVGDRYVIAELLARNWQLGGENSGHLVCFQHTTTGDAIIAALQVLMALKRRGQSLVEARSDLKKCPQVLVNVRLSGAVDPLEHPSVKEACARVTERMAGRGRVLLRKSGTEPLVRVMVEGDEESSVRGYADELAKIVAEVCA.

Catalysis depends on serine 101, which acts as the Phosphoserine intermediate. Residues serine 101, aspartate 240, aspartate 242, and aspartate 244 each contribute to the Mg(2+) site. A Phosphoserine modification is found at serine 101.

The protein belongs to the phosphohexose mutase family. Mg(2+) serves as cofactor. Post-translationally, activated by phosphorylation.

The catalysed reaction is alpha-D-glucosamine 1-phosphate = D-glucosamine 6-phosphate. Its function is as follows. Catalyzes the conversion of glucosamine-6-phosphate to glucosamine-1-phosphate. This Ectopseudomonas mendocina (strain ymp) (Pseudomonas mendocina) protein is Phosphoglucosamine mutase.